The sequence spans 287 residues: Ribosomal RNA small subunit methyltransferase A (287 aa).

S-adenosyl-L-methionine is bound by residues N28, L30, G55, E77, D103, and N123.

The protein belongs to the class I-like SAM-binding methyltransferase superfamily. rRNA adenine N(6)-methyltransferase family. RsmA subfamily.

The protein resides in the cytoplasm. It carries out the reaction adenosine(1518)/adenosine(1519) in 16S rRNA + 4 S-adenosyl-L-methionine = N(6)-dimethyladenosine(1518)/N(6)-dimethyladenosine(1519) in 16S rRNA + 4 S-adenosyl-L-homocysteine + 4 H(+). Specifically dimethylates two adjacent adenosines (A1518 and A1519) in the loop of a conserved hairpin near the 3'-end of 16S rRNA in the 30S particle. May play a critical role in biogenesis of 30S subunits. The polypeptide is Ribosomal RNA small subunit methyltransferase A (Nitrobacter winogradskyi (strain ATCC 25391 / DSM 10237 / CIP 104748 / NCIMB 11846 / Nb-255)).